The following is a 56-amino-acid chain: Small ribosomal subunit protein uS14B (56 aa).

Residues C21 and C24 each contribute to the Zn(2+) site. Residue S25 is modified to Phosphoserine. 2 residues coordinate Zn(2+): C39 and C42.

This sequence belongs to the universal ribosomal protein uS14 family. As to quaternary structure, component of the small ribosomal subunit (SSU). Mature yeast ribosomes consist of a small (40S) and a large (60S) subunit. The 40S small subunit contains 1 molecule of ribosomal RNA (18S rRNA) and 33 different proteins (encoded by 57 genes). The large 60S subunit contains 3 rRNA molecules (25S, 5.8S and 5S rRNA) and 46 different proteins (encoded by 81 genes). The cofactor is Zn(2+).

It localises to the cytoplasm. Its function is as follows. Component of the ribosome, a large ribonucleoprotein complex responsible for the synthesis of proteins in the cell. The small ribosomal subunit (SSU) binds messenger RNAs (mRNAs) and translates the encoded message by selecting cognate aminoacyl-transfer RNA (tRNA) molecules. The large subunit (LSU) contains the ribosomal catalytic site termed the peptidyl transferase center (PTC), which catalyzes the formation of peptide bonds, thereby polymerizing the amino acids delivered by tRNAs into a polypeptide chain. The nascent polypeptides leave the ribosome through a tunnel in the LSU and interact with protein factors that function in enzymatic processing, targeting, and the membrane insertion of nascent chains at the exit of the ribosomal tunnel. The sequence is that of Small ribosomal subunit protein uS14B from Saccharomyces cerevisiae (strain ATCC 204508 / S288c) (Baker's yeast).